The chain runs to 222 residues: Interleukin-12 subunit alpha (222 aa).

Residues 1-25 form the signal peptide; that stretch reads MCPLRSLFLMATLVFLNHLDHLSLA. 3 cysteine pairs are disulfide-bonded: C40–C113, C67–C199, and C88–C126. Residues N96 and N174 are each glycosylated (N-linked (GlcNAc...) asparagine).

It belongs to the IL-6 superfamily. In terms of assembly, heterodimer with IL12B; disulfide-linked. This heterodimer is known as interleukin IL-12. Heterodimer with EBI3/IL27B; not disulfide-linked. This heterodimer is known as interleukin IL-35. Interacts with NBR1; this interaction promotes IL-12 secretion.

It is found in the secreted. Its function is as follows. Heterodimerizes with IL12B to form the IL-12 cytokine or with EBI3/IL27B to form the IL-35 cytokine. IL-12 is primarily produced by professional antigen-presenting cells (APCs) such as B-cells and dendritic cells (DCs) as well as macrophages and granulocytes and regulates T-cell and natural killer-cell responses, induces the production of interferon-gamma (IFN-gamma), favors the differentiation of T-helper 1 (Th1) cells and is an important link between innate resistance and adaptive immunity. Mechanistically, exerts its biological effects through a receptor composed of IL12R1 and IL12R2 subunits. Binding to the receptor results in the rapid tyrosine phosphorylation of a number of cellular substrates including the JAK family kinases TYK2 and JAK2. In turn, recruited STAT4 gets phosphorylated and translocates to the nucleus where it regulates cytokine/growth factor responsive genes. As part of IL-35, plays essential roles in maintaining the immune homeostasis of the liver microenvironment and also functions as an immune-suppressive cytokine. Mediates biological events through unconventional receptors composed of IL12RB2 and gp130/IL6ST heterodimers or homodimers. Signaling requires the transcription factors STAT1 and STAT4, which form a unique heterodimer that binds to distinct DNA sites. The polypeptide is Interleukin-12 subunit alpha (IL12A) (Lama glama (Llama)).